Consider the following 160-residue polypeptide: General odorant-binding protein 2 (160 aa).

A signal peptide spans 1–20 (MFSFLILVFVASVADSVIGT). 3 cysteine pairs are disulfide-bonded: cysteine 38-cysteine 73, cysteine 69-cysteine 127, and cysteine 116-cysteine 136.

The protein belongs to the PBP/GOBP family. Homodimer. Detected in antenna (at protein level). Expressed at high levels in antenna.

In terms of biological role, present in the aqueous fluid surrounding olfactory sensory dendrites and are thought to aid in the capture and transport of hydrophobic odorants into and through this fluid. The polypeptide is General odorant-binding protein 2 (Bombyx mori (Silk moth)).